The following is an 845-amino-acid chain: Translation initiation factor IF-2 (845 aa).

Composition is skewed to basic and acidic residues over residues 139–198 (EAKR…EKPA) and 206–228 (FRSEDRESEQKQRGTKFGRKELH). The tract at residues 139-253 (EAKRQAAEEE…PQKAAPAAKH (115 aa)) is disordered. The tr-type G domain maps to 345–512 (SRAAVVTIMG…AILLQAEVME (168 aa)). The G1 stretch occupies residues 354 to 361 (GHVDHGKT). 354 to 361 (GHVDHGKT) lines the GTP pocket. Positions 379–383 (GITQH) are G2. Positions 400 to 403 (DTPG) are G3. GTP-binding positions include 400–404 (DTPGH) and 454–457 (NKID). The G4 stretch occupies residues 454 to 457 (NKID). The G5 stretch occupies residues 490 to 492 (SAK).

Belongs to the TRAFAC class translation factor GTPase superfamily. Classic translation factor GTPase family. IF-2 subfamily.

The protein resides in the cytoplasm. One of the essential components for the initiation of protein synthesis. Protects formylmethionyl-tRNA from spontaneous hydrolysis and promotes its binding to the 30S ribosomal subunits. Also involved in the hydrolysis of GTP during the formation of the 70S ribosomal complex. This is Translation initiation factor IF-2 from Nitrosococcus oceani (strain ATCC 19707 / BCRC 17464 / JCM 30415 / NCIMB 11848 / C-107).